A 219-amino-acid polypeptide reads, in one-letter code: Pyridoxine/pyridoxamine 5'-phosphate oxidase (219 aa).

Substrate is bound by residues 15–18 (RRDY) and K73. FMN-binding positions include 68–73 (RMVLLK), 83–84 (YT), R89, K90, and Q112. Y130, R134, and S138 together coordinate substrate. FMN-binding positions include 147-148 (QS) and W192. Substrate is bound at residue 198–200 (RLH). R202 serves as a coordination point for FMN.

It belongs to the pyridoxamine 5'-phosphate oxidase family. Homodimer. The cofactor is FMN.

It carries out the reaction pyridoxamine 5'-phosphate + O2 + H2O = pyridoxal 5'-phosphate + H2O2 + NH4(+). The catalysed reaction is pyridoxine 5'-phosphate + O2 = pyridoxal 5'-phosphate + H2O2. Its pathway is cofactor metabolism; pyridoxal 5'-phosphate salvage; pyridoxal 5'-phosphate from pyridoxamine 5'-phosphate: step 1/1. The protein operates within cofactor metabolism; pyridoxal 5'-phosphate salvage; pyridoxal 5'-phosphate from pyridoxine 5'-phosphate: step 1/1. Functionally, catalyzes the oxidation of either pyridoxine 5'-phosphate (PNP) or pyridoxamine 5'-phosphate (PMP) into pyridoxal 5'-phosphate (PLP). The sequence is that of Pyridoxine/pyridoxamine 5'-phosphate oxidase from Acaryochloris marina (strain MBIC 11017).